The sequence spans 521 residues: Phomenoic acid biosynthesis cluster-specific transcriptional regulator (521 aa).

The segment at residues 46 to 76 (HCWQCRRSCVVCDFTQPGCQRCSAAGVSCPG) is a DNA-binding region (zn(2)-C6 fungal-type).

The protein localises to the nucleus. Transcriptional regulator; part of the gene cluster that mediates the biosynthesis of phomenoic acid, a long chain aliphatic carboxylic acid that does not appear to be essential for pathogenicity but may play a role in allowing to outcompete other fungi in the environmental niche via its antifungal properties. Positively regulates the expression of the cluster and subsequent production of phomenoic acid. The protein is Phomenoic acid biosynthesis cluster-specific transcriptional regulator of Leptosphaeria maculans (strain JN3 / isolate v23.1.3 / race Av1-4-5-6-7-8) (Blackleg fungus).